The primary structure comprises 274 residues: MEMDIQESLLRLLRPLGLQRAEALAGALAREAGASKGLHDSQVLARAHALSVAPVEGRLGDLVWQVRQREHDGAPQVDLRWGLHRLGLDAPSRASTRDLVRAYERRLADRNEPMVYSTLAERVAGSMAEHTSLFQGMAMAVEEARARRSDANRLRENAPWQGWLVGASRAGHEAALLACIGMGADARLPDASGNTPLHHAARFGHFSLVTPLVEAGADVAALNAHGWAPLHLAALHKHARACLHLMAHGANPEQPGWRGRTPTRMHRHEQTQAL.

ANK repeat units lie at residues 192–221 and 225–254; these read SGNT…DVAA and HGWA…NPEQ. The tract at residues 251-274 is disordered; sequence NPEQPGWRGRTPTRMHRHEQTQAL.

In terms of assembly, exists as a dimer as well as a higher order oligomer.

The protein resides in the secreted. Its subcellular location is the periplasm. Its function is as follows. Directly binds F-actin, which results in thickened and distorted F-actin fibers, and affects cellular F-actin localization. Thus, may be a host effector whose function is to disrupt host actin cytoskeletal structure, which may enhance invasion. This chain is Actin-binding protein Smlt3054, found in Stenotrophomonas maltophilia (strain K279a).